Consider the following 132-residue polypeptide: Large-conductance mechanosensitive channel (132 aa).

The next 2 membrane-spanning stretches (helical) occupy residues 14 to 34 (VIDL…VSSL) and 67 to 87 (GNFI…FMFV).

Belongs to the MscL family. As to quaternary structure, homopentamer.

The protein resides in the cell membrane. Its function is as follows. Channel that opens in response to stretch forces in the membrane lipid bilayer. May participate in the regulation of osmotic pressure changes within the cell. The polypeptide is Large-conductance mechanosensitive channel (Bacillus cereus (strain AH820)).